The following is a 49-amino-acid chain: Large ribosomal subunit protein bL33 (49 aa).

Belongs to the bacterial ribosomal protein bL33 family.

The protein is Large ribosomal subunit protein bL33 of Syntrophotalea carbinolica (strain DSM 2380 / NBRC 103641 / GraBd1) (Pelobacter carbinolicus).